We begin with the raw amino-acid sequence, 181 residues long: Bradykinin potentiating and C-type natriuretic peptides (181 aa).

The N-terminal stretch at 1–23 (MFVSRLAASGLLLLALLAVSLDG) is a signal peptide. Residues 24–27 (KPLQ) constitute a propeptide that is removed on maturation. Pyrrolidone carboxylic acid occurs at positions 28 and 31. The propeptide occupies 41 to 43 (LVV). Gln-44 carries the pyrrolidone carboxylic acid modification. Residues 50–52 (TQL) constitute a propeptide that is removed on maturation. At Gln-53 the chain carries Pyrrolidone carboxylic acid. A propeptide spanning residues 59–159 (AGGTTALREE…ARRLKGLAKK (101 aa)) is cleaved from the precursor. Residues 74–150 (EAALDTPPAG…GGGCGGGGGA (77 aa)) are disordered. Positions 104 to 114 (SKGASATSAAS) are enriched in low complexity. Gly residues predominate over residues 140 to 150 (AGGGCGGGGGA). Cys-165 and Cys-181 are oxidised to a cystine.

It in the N-terminal section; belongs to the bradykinin-potentiating peptide family. In the C-terminal section; belongs to the natriuretic peptide family. In terms of tissue distribution, venom gland.

The protein localises to the secreted. Its function is as follows. Bradykinin-potentiating peptide both inhibits the activity of the angiotensin-converting enzyme (ACE) and enhances the action of bradykinin by inhibiting the peptidases that inactivate it. It acts as an indirect hypotensive agent. Synthetic Cdt1a, Cdt1b and the short hexapeptide Cdt3 are able to potentiate the hypotensive effect mediated by Bk on the blood pressure of anesthetized rats. Has a vasorelaxant activity in rat aortic strips and a diuretic potency in anesthetized rats. May act by activating natriuretic receptors (NPR1 and/or NPR2). In Crotalus durissus terrificus (South American rattlesnake), this protein is Bradykinin potentiating and C-type natriuretic peptides.